We begin with the raw amino-acid sequence, 278 residues long: Lipoyl-[GcvH]:protein N-lipoyltransferase (278 aa).

The BPL/LPL catalytic domain occupies 44-250 (RMAPSTVRGW…SLRHYAGDLV (207 aa)). Cysteine 149 serves as the catalytic Acyl-thioester intermediate.

The protein belongs to the octanoyltransferase LipL family.

The enzyme catalyses N(6)-[(R)-lipoyl]-L-lysyl-[glycine-cleavage complex H protein] + L-lysyl-[lipoyl-carrier protein] = L-lysyl-[glycine-cleavage complex H protein] + N(6)-[(R)-lipoyl]-L-lysyl-[lipoyl-carrier protein]. The protein operates within protein modification; protein lipoylation via exogenous pathway. Functionally, catalyzes the amidotransfer (transamidation) of the lipoyl moiety from lipoyl-GcvH to the lipoyl domain of the E2 subunit of lipoate-dependent enzymes. Takes part in a pathway for scavenging of lipoic acid derived from eukaryotic host cells. Cannot use lipoyl-tripeptide (DK(L)A), lipoamide (LD), or free lipoate as substrate. This is Lipoyl-[GcvH]:protein N-lipoyltransferase from Listeria monocytogenes serovar 1/2a (strain ATCC BAA-679 / EGD-e).